A 296-amino-acid polypeptide reads, in one-letter code: MSQKELWYETLHANFGQYFSVENVLYREKTEHQDLVIFENPELGRVMALDGVVQTTERDEFIYHEMMTHVPLLAHGQAKKVLIIGGGDGAMLREVSRHKNIEQITMVEIDAGVVEFCRQYLPNHSAGAYDDPRFKLVIDDGVNFVNQTTEKFDVIISDCTDPIGPGESLFTSVFYEGCARSLNEGGIFVAQNGVCFLQQDEAVNSHNKLSHYFSDVSFYQAAIPTYYGGIMTFAWATQNPALRQLDLATLQNRFAQAGLACRYYNPAIHVGSFALPQYLLDALTTIPKVIGVDSSE.

A PABS domain is found at 5–238 (ELWYETLHAN…GIMTFAWATQ (234 aa)). Q33 contacts S-methyl-5'-thioadenosine. Spermidine contacts are provided by H64 and D88. Residues E108 and 140–141 (DG) each bind S-methyl-5'-thioadenosine. D158 serves as the catalytic Proton acceptor. 158–161 (DCTD) serves as a coordination point for spermidine. P165 contacts S-methyl-5'-thioadenosine.

Belongs to the spermidine/spermine synthase family. In terms of assembly, homodimer or homotetramer.

It is found in the cytoplasm. The enzyme catalyses S-adenosyl 3-(methylsulfanyl)propylamine + putrescine = S-methyl-5'-thioadenosine + spermidine + H(+). Its pathway is amine and polyamine biosynthesis; spermidine biosynthesis; spermidine from putrescine: step 1/1. Its function is as follows. Catalyzes the irreversible transfer of a propylamine group from the amino donor S-adenosylmethioninamine (decarboxy-AdoMet) to putrescine (1,4-diaminobutane) to yield spermidine. The sequence is that of Polyamine aminopropyltransferase from Yersinia pseudotuberculosis serotype O:1b (strain IP 31758).